A 397-amino-acid chain; its full sequence is Cathepsin E (397 aa).

Positions 1 to 16 (MKQFLVVLLILSFVHG) are cleaved as a signal peptide. The propeptide at 17–49 (IIRVPLKRQKSMRKILKEKGKLSHLWTKQGNEF) is activation peptide. Residues 74 to 385 (YFGQISIGTP…DRGNNRVGFA (312 aa)) form the Peptidase A1 domain. Residue Asp-92 is part of the active site. Cys-105 and Cys-110 form a disulfide bridge. Asn-139 carries N-linked (GlcNAc...) asparagine glycosylation. Cysteines 268 and 272 form a disulfide. Residue Asp-277 is part of the active site. An intrachain disulfide couples Cys-310 to Cys-344.

It belongs to the peptidase A1 family. As to quaternary structure, homodimer; disulfide-linked. Glycosylated. Contains high mannose-type oligosaccharide. As to expression, found in the larval foregut and adult stomach.

It localises to the endosome. It carries out the reaction Similar to cathepsin D, but slightly broader specificity.. In terms of biological role, may have a role in immune function. Probably involved in the processing of antigenic peptides during MHC class II-mediated antigen presentation. The polypeptide is Cathepsin E (CTSE) (Aquarana catesbeiana (American bullfrog)).